The primary structure comprises 349 residues: Isopentenyl-diphosphate delta-isomerase (349 aa).

Substrate is bound at residue 5–6; it reads RK. FMN-binding positions include Ser61, 62-64, Ser92, and Asn120; that span reads SMT. Residue 92-94 coordinates substrate; the sequence is SMR. Position 159 (Gln159) interacts with substrate. Glu160 serves as a coordination point for Mg(2+). Residues Lys189, Thr219, 269–271, and 290–291 contribute to the FMN site; these read GLR and AR.

Belongs to the IPP isomerase type 2 family. Homooctamer. Dimer of tetramers. The cofactor is FMN. NADPH is required as a cofactor. Mg(2+) serves as cofactor.

The protein resides in the cytoplasm. The catalysed reaction is isopentenyl diphosphate = dimethylallyl diphosphate. Functionally, involved in the biosynthesis of isoprenoids. Catalyzes the 1,3-allylic rearrangement of the homoallylic substrate isopentenyl (IPP) to its allylic isomer, dimethylallyl diphosphate (DMAPP). The polypeptide is Isopentenyl-diphosphate delta-isomerase (Picrophilus torridus (strain ATCC 700027 / DSM 9790 / JCM 10055 / NBRC 100828 / KAW 2/3)).